A 365-amino-acid chain; its full sequence is 3-isopropylmalate dehydrogenase (365 aa).

NAD(+) is bound at residue 78-89 (GPKWGTGKVRPE). Residues R96, R106, R135, and D224 each contribute to the substrate site. Mg(2+)-binding residues include D224, D249, and D253. 289-301 (GSAPDISGKGIVN) serves as a coordination point for NAD(+).

Belongs to the isocitrate and isopropylmalate dehydrogenases family. As to quaternary structure, homodimer. The cofactor is Mg(2+). Mn(2+) is required as a cofactor.

The protein resides in the cytoplasm. It catalyses the reaction (2R,3S)-3-isopropylmalate + NAD(+) = 4-methyl-2-oxopentanoate + CO2 + NADH. It participates in amino-acid biosynthesis; L-leucine biosynthesis; L-leucine from 3-methyl-2-oxobutanoate: step 3/4. Catalyzes the oxidation of 3-carboxy-2-hydroxy-4-methylpentanoate (3-isopropylmalate) to 3-carboxy-4-methyl-2-oxopentanoate. The product decarboxylates to 4-methyl-2 oxopentanoate. In Zymoseptoria tritici (Speckled leaf blotch fungus), this protein is 3-isopropylmalate dehydrogenase (LEUC).